Here is a 103-residue protein sequence, read N- to C-terminus: Stefin-3 (103 aa).

The Secondary area of contact motif lies at 52–56; that stretch reads QVVAG.

It belongs to the cystatin family.

It localises to the cytoplasm. Its function is as follows. This is an intracellular thiol proteinase inhibitor. This chain is Stefin-3 (Stfa3), found in Mus musculus (Mouse).